We begin with the raw amino-acid sequence, 2440 residues long: Nuclear receptor corepressor 1 (2440 aa).

A compositionally biased stretch (polar residues) spans 1–18; that stretch reads MSSSGYPPNQGAFSTEQS. Disordered regions lie at residues 1–177 and 206–231; these read MSSS…SKLS and QQQL…VEQK. The tract at residues 1–373 is interaction with ZBTB33 and HEXIM1; that stretch reads MSSSGYPPNQ…QRGAGLSATI (373 aa). Residues 51-64 show a composition bias toward low complexity; the sequence is SQASQLLQQQQQQQ. 3 stretches are compositionally biased toward basic and acidic residues: residues 77–88, 99–119, and 141–155; these read PGSDRPQERRTS, VDHD…DSHF, and ADAK…KHEA. Phosphoserine is present on S172. The stretch at 174-216 forms a coiled coil; it reads SKLSKEELIQSMDRVDREIAKVEQQILKLKKKQQQLEEEAAKP. Residues 212 to 221 show a composition bias toward basic and acidic residues; that stretch reads EAAKPPEPEK. A Phosphoserine modification is found at S224. Residues 254–312 form an interaction with SIN3A/B region; the sequence is FEGLGPKVELPLYNQPSDTKVYHENIKTNQVMRKKLILFFKRRNHARKQREQKICQRYD. Residues 299–328 are a coiled coil; that stretch reads ARKQREQKICQRYDQLMEAWEKKVDRIENN. The SANT 1 domain occupies 435-486; that stretch reads QFMNVWTDHEKEIFKDKFIQHPKNFGLIASYLERKSVPDCVLYYYLTKKNEN. Disordered regions lie at residues 497–632 and 677–915; these read KRRG…TEEE and NLLQ…GSIL. The stretch at 501–557 forms a coiled coil; that stretch reads RNQQIARPSQEEKVEEKEEDKAEKTEKKEEEKKDEEEKDEKEDSKENTKEKDKIDGT. Composition is skewed to basic and acidic residues over residues 509-531 and 541-556; these read SQEE…KEEE and KEDS…KIDG. Residues 592 to 605 are compositionally biased toward low complexity; that stretch reads EAAAASAAAAAATE. Positions 606–617 are enriched in pro residues; sequence EPPPPLPPPPEP. The SANT 2 domain maps to 623–674; sequence VETSRWTEEEMEVAKKGLVEHGRNWAAIAKMVGTKSEAQCKNFYFNYKRRHN. Positions 698–708 are enriched in polar residues; that stretch reads QCESVASTVSA. Residues 709-728 are compositionally biased toward acidic residues; it reads QEDEDIEASNEEENPEDSEV. The segment covering 752–768 has biased composition (low complexity); that stretch reads ELEPTTETAPSTSPSLA. Residues 781-792 show a composition bias toward polar residues; the sequence is ETQVNDSISAET. The segment covering 820-859 has biased composition (basic and acidic residues); sequence DSVDVEVRVPENHASKVEGDNTKERDLDRASEKVEPRDED. 2 stretches are compositionally biased toward polar residues: residues 864-883 and 906-915; these read QQIN…SATC and SLLNPTGSIL. Residues 988–1816 form an interaction with ETO region; sequence RSSTSPCGTS…QGLPASRYNT (829 aa). The residue at position 999 (S999) is a Phosphoserine. A disordered region spans residues 1022-1046; the sequence is VRLPTTRPTRPPPPLIPSSKTTVAS. K1106 is covalently cross-linked (Glycyl lysine isopeptide (Lys-Gly) (interchain with G-Cter in SUMO1); alternate). A Glycyl lysine isopeptide (Lys-Gly) (interchain with G-Cter in SUMO2); alternate cross-link involves residue K1106. A Phosphoserine modification is found at S1111. A Glycyl lysine isopeptide (Lys-Gly) (interchain with G-Cter in SUMO2) cross-link involves residue K1184. Positions 1184-1204 are disordered; that stretch reads KGSISRMPIEDSSPEKGREEA. A phosphoserine mark is found at S1195, S1196, S1249, S1263, S1281, and S1322. At K1336 the chain carries N6-acetyllysine. Position 1367 is a phosphothreonine (T1367). K1389 is covalently cross-linked (Glycyl lysine isopeptide (Lys-Gly) (interchain with G-Cter in SUMO2)). A Glycyl lysine isopeptide (Lys-Gly) (interchain with G-Cter in SUMO2); alternate cross-link involves residue K1412. K1412 carries the N6-acetyllysine; alternate modification. Residues 1440–1459 are disordered; that stretch reads AGETVRSRHTSVVSSGPSVL. Phosphoserine is present on residues S1450 and S1472. Positions 1488–1512 are enriched in polar residues; the sequence is YQNTMSRGSPMMNRTSDVTISSNKS. The tract at residues 1488–1554 is disordered; sequence YQNTMSRGSP…SPFDPHHRGS (67 aa). An interaction with C1D region spans residues 1501–2440; that stretch reads RTSDVTISSN…QYETLSDSDD (940 aa). K1518 participates in a covalent cross-link: Glycyl lysine isopeptide (Lys-Gly) (interchain with G-Cter in SUMO2). S1592 is subject to Phosphoserine. Disordered regions lie at residues 1690 to 1759 and 1884 to 1922; these read PRPY…SPSP and SSAF…LRTR. Basic and acidic residues-rich tracts occupy residues 1712–1729 and 1903–1921; these read AERE…RERI and AGKD…ELRT. The CORNR box 1 signature appears at 1933-1937; the sequence is IDVII. The segment at 1943-1969 is disordered; that stretch reads SDKDARERGSQSSDSSSSLSSHRYETP. Low complexity predominate over residues 1952–1963; that stretch reads SQSSDSSSSLSS. A phosphoserine mark is found at S1977 and S1981. The interval 2006 to 2041 is disordered; sequence PTRQYEGPLHHYRPQQESPSPQQQLPPSSQAEGMGQ. Residues 2020–2035 show a composition bias toward low complexity; the sequence is QQESPSPQQQLPPSSQ. The ID1 stretch occupies residues 2032 to 2115; it reads PSSQAEGMGQ…QAQSVHHQRP (84 aa). Residues 2047 to 2050 are required for interaction with RARA in the absence of its ligand; that stretch reads RLIT. Positions 2055 to 2059 match the CORNR box 2 motif; the sequence is ICQII. Over residues 2067–2086 the composition is skewed to low complexity; that stretch reads QVSSQTPQQPPTSTFQNSPS. The disordered stretch occupies residues 2067-2155; that stretch reads QVSSQTPQQP…PYEPISPPQV (89 aa). Over residues 2087-2110 the composition is skewed to polar residues; sequence ALVSTPVRTKTSNRYSPESQAQSV. Phosphoserine is present on residues S2102, S2120, S2136, S2151, and S2184. Residues 2124–2142 show a composition bias toward basic and acidic residues; the sequence is LVDKSRGSRPGKSPERSHV. Positions 2212–2273 are ID2; sequence IFRKLNSSGG…EDIIRKALMG (62 aa). The CORNR box 3 motif lies at 2263 to 2267; the sequence is LEDII. The segment at 2287 to 2440 is disordered; it reads SQPMGVVPGT…QYETLSDSDD (154 aa). Residues 2296-2305 are compositionally biased toward polar residues; the sequence is TANTSVVTSG. T2399 carries the post-translational modification Phosphothreonine. Polar residues-rich tracts occupy residues 2407–2418 and 2431–2440; these read AVNQAAPHQQNR and QYETLSDSDD. Phosphoserine occurs at positions 2436 and 2438.

The protein belongs to the N-CoR nuclear receptor corepressors family. Forms a large corepressor complex that contains SIN3A/B and histone deacetylases HDAC1 and HDAC2. This complex associates with the thyroid receptor (TR) and the retinoid acid receptor (RAR) in the absence of ligand. Interacts directly with RARA; the interaction is facilitated with RARA trimethylation. Component of the N-Cor repressor complex, at least composed of CBFA2T3, HEXIM1, NCOR1, NCOR2, HDAC3, TBL1X, TBL1XR1, CORO2A and GPS2. Interacts with ZBTB33; the interaction serves to recruit the N-CoR complex to promoter regions containing methylated CpG dinucleotides. Interacts with TRIM28 and KDM3A. Interacts (via the RD1 domain) with BAZ1A (via its N-terminal); the interaction corepresses a number of NCOR1-regulated genes. Interacts with BCL6, C1D, DACH1, HEXIM1, HDAC7, RORA, RORC, SAP30, SIAH2, SIN3A and SIN3B. May interact with DEAF1. Interacts with RXRA. Interacts with SETD5. Interacts with VDR. Interacts with ZBTB7A. Interacts with AR. Interacts with HDAC3. In terms of processing, ubiquitinated; mediated by SIAH2 and leading to its subsequent proteasomal degradation.

The protein localises to the nucleus. In terms of biological role, mediates transcriptional repression by certain nuclear receptors. Part of a complex which promotes histone deacetylation and the formation of repressive chromatin structures which may impede the access of basal transcription factors. Participates in the transcriptional repressor activity produced by BCL6. Recruited by ZBTB7A to the androgen response elements/ARE on target genes, negatively regulates androgen receptor signaling and androgen-induced cell proliferation. Mediates the NR1D1-dependent repression and circadian regulation of TSHB expression. The NCOR1-HDAC3 complex regulates the circadian expression of the core clock gene ARTNL/BMAL1 and the genes involved in lipid metabolism in the liver. This Homo sapiens (Human) protein is Nuclear receptor corepressor 1 (NCOR1).